The chain runs to 566 residues: Chondroitin sulfate proteoglycan 5 (566 aa).

Residues 1–30 (MGRAGGGGPGRGPPPLLLFLGAALVLASGA) form the signal peptide. Residues 31–423 (VPAREAGSAV…SIITDFQVMC (393 aa)) lie on the Extracellular side of the membrane. O-linked (Xyl...) (chondroitin sulfate) serine glycosylation occurs at S38. The disordered stretch occupies residues 39–82 (AVEAEELVKGSPAWEPPANDTREEAGPPAAGEDEASWTAPGGEL). N-linked (GlcNAc...) asparagine glycosylation is present at N57. S117 is a glycosylation site (O-linked (Xyl...) (chondroitin sulfate) serine). Disordered regions lie at residues 143-202 (IPEA…LEPQ), 215-248 (GLDG…TPSW), and 262-354 (ESDF…ASSE). The O-linked (GalNAc...) serine glycan is linked to S165. The interaction with TNC and TNR stretch occupies residues 264–301 (DFYPTTSFYDDLDEEEEEEEDDKDAVGGGDLEDENELL). Residues 273-286 (DDLDEEEEEEEDDK) show a composition bias toward acidic residues. The region spanning 371 to 413 (RSVCDLFPSYCHNGGQCYLVENIGAFCRCNTQDYIWHKGMRCE) is the EGF-like domain. 3 cysteine pairs are disulfide-bonded: C374-C387, C381-C397, and C399-C412. A helical membrane pass occupies residues 424–444 (VAVGSAALVLLLLFMMTVFFA). The interaction with GOPC stretch occupies residues 442 to 460 (FFAKKLYLLKTENTKLRRT). Residues 445-566 (KKLYLLKTEN…DVNCLQNNLT (122 aa)) are Cytoplasmic-facing. S467, S475, S483, and S543 each carry phosphoserine.

Binds TNR and probably TNC. Interacts with ERBB3 and GOPC. Interacts with MDK; this interaction is independent of the presence of chondroitin sulfate chains and promotes elongation of oligodendroglial precursor-like cells. N-glycosylated. In terms of processing, O-glycosylated; contains chondroitin sulfate glycans. Part-time proteoglycan, expressed in part as a proteoglycan exhibiting chondroitin sulfate glycans and in part as a non-proteoglycan form. The relative amount of both forms depends on tissues and tissue maturation. Post-translationally, phosphorylated; in intracellular and extracellular parts. As to expression, detected in cerebrospinal fluid (at protein level). Detected in urine (at protein level). Expressed in brain (at protein level).

It is found in the cell membrane. It localises to the synaptic cell membrane. The protein localises to the endoplasmic reticulum membrane. Its subcellular location is the golgi apparatus membrane. The protein resides in the cell surface. It is found in the secreted. Its function is as follows. May function as a growth and differentiation factor involved in neuritogenesis. May induce ERBB3 activation. The sequence is that of Chondroitin sulfate proteoglycan 5 (CSPG5) from Homo sapiens (Human).